Here is a 245-residue protein sequence, read N- to C-terminus: MDGTRTSLDIEEYSDTEVQKNQVLTLEEWQDKWVNGKTAFHQEQGHQLLKKHLDTFLKGKSGLRVFFPLCGKAVEMKWFADRGHSVVGVEISELGIQEFFTEQNLSYSEEPITEIPGTKVFKSSSGNISLYCCSIFDLPRTNIGKFDMIWDRGALVAINPGDRKCYADTMFSLLGKKFQYLLCVLSYDPTKHPGPPFYVPHAEIERLFGKICNIRCLEKVDAFEERHKSWGIDCLFEKLYLLTEK.

Position 14 is a phosphoserine (serine 14). 29–40 (WQDKWVNGKTAF) lines the S-adenosyl-L-methionine pocket. Phenylalanine 40 serves as a coordination point for substrate. Lysine 58 is modified (N6-acetyllysine). Residues leucine 69, glutamate 90, 134–135 (SI), and arginine 152 each bind S-adenosyl-L-methionine.

Belongs to the class I-like SAM-binding methyltransferase superfamily. TPMT family. In terms of assembly, monomer.

Its subcellular location is the cytoplasm. It carries out the reaction S-adenosyl-L-methionine + a thiopurine = S-adenosyl-L-homocysteine + a thiopurine S-methylether.. The catalysed reaction is mercaptopurine + S-adenosyl-L-methionine = 6-methylthiopurine + S-adenosyl-L-homocysteine + H(+). The enzyme catalyses 6-thioguanine + S-adenosyl-L-methionine = 6-methylthioguanine + S-adenosyl-L-homocysteine + H(+). With respect to regulation, inhibited by S-adenosyl-L-homocysteine (SAH). In terms of biological role, catalyzes the S-methylation of thiopurine drugs such as 6-mercaptopurine (also called mercaptopurine, 6-MP or its brand name Purinethol) and 6-thioguanine (also called tioguanine or 6-TG) using S-adenosyl-L-methionine as the methyl donor. TPMT activity modulates the cytotoxic effects of thiopurine prodrugs. A natural substrate for this enzyme has yet to be identified. This is Thiopurine S-methyltransferase (TPMT) from Homo sapiens (Human).